The chain runs to 452 residues: Exodeoxyribonuclease 7 large subunit (452 aa).

The protein belongs to the XseA family. As to quaternary structure, heterooligomer composed of large and small subunits.

The protein localises to the cytoplasm. It carries out the reaction Exonucleolytic cleavage in either 5'- to 3'- or 3'- to 5'-direction to yield nucleoside 5'-phosphates.. In terms of biological role, bidirectionally degrades single-stranded DNA into large acid-insoluble oligonucleotides, which are then degraded further into small acid-soluble oligonucleotides. The protein is Exodeoxyribonuclease 7 large subunit of Bacillus cereus (strain 03BB102).